A 556-amino-acid chain; its full sequence is Butanoate--CoA ligase AAE1 (556 aa).

Positions 554-556 match the Microbody targeting signal motif; it reads SKL.

This sequence belongs to the ATP-dependent AMP-binding enzyme family. In terms of tissue distribution, expressed in roots, leaves, stems, flowers and developing seeds.

The protein localises to the peroxisome. The catalysed reaction is butanoate + ATP + CoA = butanoyl-CoA + AMP + diphosphate. The enzyme catalyses hexanoate + ATP + CoA = hexanoyl-CoA + AMP + diphosphate. It carries out the reaction pentanoate + ATP + CoA = pentanoyl-CoA + AMP + diphosphate. It catalyses the reaction 4-methylpentanoate + ATP + CoA = 4-methylpentanoyl-CoA + AMP + diphosphate. Catalyzes the ligation of CoA on butanoate to produce butanoyl-CoA. Can also use hexanoate, pentanoate and 4-methylpentanoate as substrates with a lower efficiency. This is Butanoate--CoA ligase AAE1 from Arabidopsis thaliana (Mouse-ear cress).